Here is a 291-residue protein sequence, read N- to C-terminus: 4-hydroxy-tetrahydrodipicolinate synthase (291 aa).

Residue Thr44 coordinates pyruvate. Residue Tyr132 is the Proton donor/acceptor of the active site. The active-site Schiff-base intermediate with substrate is the Lys160. Ile202 lines the pyruvate pocket.

The protein belongs to the DapA family. In terms of assembly, homotetramer; dimer of dimers.

The protein resides in the cytoplasm. It carries out the reaction L-aspartate 4-semialdehyde + pyruvate = (2S,4S)-4-hydroxy-2,3,4,5-tetrahydrodipicolinate + H2O + H(+). Its pathway is amino-acid biosynthesis; L-lysine biosynthesis via DAP pathway; (S)-tetrahydrodipicolinate from L-aspartate: step 3/4. Its function is as follows. Catalyzes the condensation of (S)-aspartate-beta-semialdehyde [(S)-ASA] and pyruvate to 4-hydroxy-tetrahydrodipicolinate (HTPA). The chain is 4-hydroxy-tetrahydrodipicolinate synthase from Rhizorhabdus wittichii (strain DSM 6014 / CCUG 31198 / JCM 15750 / NBRC 105917 / EY 4224 / RW1) (Sphingomonas wittichii).